The following is a 185-amino-acid chain: Small ribosomal subunit protein uS5 (185 aa).

Residues 29–92 form the S5 DRBM domain; that stretch reads LEEKVVKINR…EKAKKQLVRI (64 aa).

This sequence belongs to the universal ribosomal protein uS5 family. In terms of assembly, part of the 30S ribosomal subunit. Contacts proteins S4 and S8.

In terms of biological role, with S4 and S12 plays an important role in translational accuracy. Functionally, located at the back of the 30S subunit body where it stabilizes the conformation of the head with respect to the body. The chain is Small ribosomal subunit protein uS5 from Aster yellows witches'-broom phytoplasma (strain AYWB).